Reading from the N-terminus, the 425-residue chain is Orexin/Hypocretin receptor type 1 (425 aa).

Residues 1–25 (MEPSATPGPQMGVPTEGRERSPEPP) form a disordered region. Residues 1 to 46 (MEPSATPGPQMGVPTEGRERSPEPPDYEDEFLRYLWRDYLYPKQYE) lie on the Extracellular side of the membrane. A required for response to orexin-A region spans residues 26–41 (DYEDEFLRYLWRDYLY). The helical transmembrane segment at 47-67 (WVLIAAYVAVFFVALVGNTLV) threads the bilayer. At 68-82 (CLAVWRNHHMRTVTN) the chain is on the cytoplasmic side. Residues 83–105 (YFIVNLSLADVLVTAICLPASLL) traverse the membrane as a helical segment. The Extracellular portion of the chain corresponds to 106–119 (VDITESWLFGHALC). Cys119 and Cys202 are oxidised to a cystine. Residues 120–140 (KVIPYLQAVSVSVAVLTLSFI) traverse the membrane as a helical segment. The Cytoplasmic segment spans residues 141–160 (ALDRWYAICHPLLFKSTARR). The chain crosses the membrane as a helical span at residues 161-182 (ARGSILGIWAVSLAVMVPQAAV). The Extracellular segment spans residues 183 to 213 (MECSSVLPELANRTRLFSVCDERWADDLYPK). The N-linked (GlcNAc...) asparagine glycan is linked to Asn194. The chain crosses the membrane as a helical span at residues 214–235 (IYHSCFFIVTYLAPLGLMAMAY). Over 236-298 (FQIFRKLWGR…QMRARRKTAK (63 aa)) the chain is Cytoplasmic. A helical membrane pass occupies residues 299 to 321 (MLMVVLLVFALCYLPISVLNVLK). The Extracellular segment spans residues 322 to 336 (RVFGMFRQASDREAV). Residues 337 to 360 (YACFTFSHWLVYANSAANPIIYNF) form a helical membrane-spanning segment. Over 361-425 (LSGKFREQFK…LLTSVTTVLP (65 aa)) the chain is Cytoplasmic.

This sequence belongs to the G-protein coupled receptor 1 family.

The protein localises to the cell membrane. Functionally, moderately selective excitatory receptor for orexin-A and, with a lower affinity, for orexin-B neuropeptide. Triggers an increase in cytoplasmic Ca(2+) levels in response to orexin-A binding. This is Orexin/Hypocretin receptor type 1 from Bos taurus (Bovine).